The following is a 228-amino-acid chain: GrpE protein homolog, mitochondrial (228 aa).

Over residues 46–57 (DEAKSEESKENN) the composition is skewed to basic and acidic residues. Residues 46–66 (DEAKSEESKENNEDLTEEQSE) form a disordered region.

Belongs to the GrpE family. Component of the PAM complex, at least composed of SSC1 (mtHsp70), MGE1, TIM44, PAM16/TIM16, PAM17 and PAM18/TIM14. Interacts with SSQ1. Post-translationally, the N-terminus is blocked.

Its subcellular location is the mitochondrion matrix. Its function is as follows. Essential component of the PAM complex, a complex required for the translocation of transit peptide-containing proteins from the inner membrane into the mitochondrial matrix in an ATP-dependent manner. Seems to control the nucleotide-dependent binding of SSC1 to substrate proteins and the association of SSC1 with TIM44. The protein is GrpE protein homolog, mitochondrial (MGE1) of Saccharomyces cerevisiae (strain ATCC 204508 / S288c) (Baker's yeast).